The following is a 251-amino-acid chain: Adenosylcobinamide-GDP ribazoletransferase (251 aa).

The next 7 helical transmembrane spans lie at 36–56, 60–80, 110–130, 141–161, 181–201, 202–222, and 231–251; these read LYPF…FVLS, VPIM…TGFL, VGAF…AGMF, ILIF…VSQE, EIIL…TLGI, NYLI…LKVK, and DVAG…LGII.

This sequence belongs to the CobS family. Mg(2+) serves as cofactor.

Its subcellular location is the cell membrane. The catalysed reaction is alpha-ribazole + adenosylcob(III)inamide-GDP = adenosylcob(III)alamin + GMP + H(+). It catalyses the reaction alpha-ribazole 5'-phosphate + adenosylcob(III)inamide-GDP = adenosylcob(III)alamin 5'-phosphate + GMP + H(+). Its pathway is cofactor biosynthesis; adenosylcobalamin biosynthesis; adenosylcobalamin from cob(II)yrinate a,c-diamide: step 7/7. In terms of biological role, joins adenosylcobinamide-GDP and alpha-ribazole to generate adenosylcobalamin (Ado-cobalamin). Also synthesizes adenosylcobalamin 5'-phosphate from adenosylcobinamide-GDP and alpha-ribazole 5'-phosphate. This chain is Adenosylcobinamide-GDP ribazoletransferase, found in Clostridium perfringens (strain ATCC 13124 / DSM 756 / JCM 1290 / NCIMB 6125 / NCTC 8237 / Type A).